We begin with the raw amino-acid sequence, 223 residues long: MKKNKFQIKREATFESFIDAGVNLLIDRAYDPVSVEDISRAAGYSKGAFYVHFVSKDDFLLYLLEKRQMKKKIIIGYLDQMERESVKSLTLDEAAKHAAELLYSYYINKPSWDITSFAMNMPTYKVLKKCKAYVRLYELWVEENVLYIKWLKERKLIDACIDPEYTAKIICAVLDGIIKQSYVLGQPATFRSFLDALSVFFTLDREHERPRILKSFSESEEHQ.

The HTH tetR-type domain occupies 11–71 (EATFESFIDA…YLLEKRQMKK (61 aa)). The H-T-H motif DNA-binding region spans 34–53 (SVEDISRAAGYSKGAFYVHF).

This is an uncharacterized protein from Bacillus subtilis (strain 168).